Here is a 178-residue protein sequence, read N- to C-terminus: Anthranilate synthase component 2 (178 aa).

The 178-residue stretch at Met1–Gly178 folds into the Glutamine amidotransferase type-1 domain. Gly49–Gly51 is a binding site for L-glutamine. Catalysis depends on Cys71, which acts as the Nucleophile; for GATase activity. Residues Gln75 and Ser120 to Leu121 contribute to the L-glutamine site. Active-site for GATase activity residues include His155 and Glu157.

In terms of assembly, heterotetramer consisting of two non-identical subunits: a beta subunit (TrpG) and a large alpha subunit (TrpE).

It carries out the reaction chorismate + L-glutamine = anthranilate + pyruvate + L-glutamate + H(+). Its pathway is amino-acid biosynthesis; L-tryptophan biosynthesis; L-tryptophan from chorismate: step 1/5. In terms of biological role, part of a heterotetrameric complex that catalyzes the two-step biosynthesis of anthranilate, an intermediate in the biosynthesis of L-tryptophan. In the first step, the glutamine-binding beta subunit (TrpG) of anthranilate synthase (AS) provides the glutamine amidotransferase activity which generates ammonia as a substrate that, along with chorismate, is used in the second step, catalyzed by the large alpha subunit of AS (TrpE) to produce anthranilate. In the absence of TrpG, TrpE can synthesize anthranilate directly from chorismate and high concentrations of ammonia. The sequence is that of Anthranilate synthase component 2 (trpG) from Archaeoglobus fulgidus (strain ATCC 49558 / DSM 4304 / JCM 9628 / NBRC 100126 / VC-16).